The following is a 266-amino-acid chain: Tryptophan synthase alpha chain (266 aa).

Residues glutamate 45 and aspartate 56 each act as proton acceptor in the active site.

It belongs to the TrpA family. Tetramer of two alpha and two beta chains.

It carries out the reaction (1S,2R)-1-C-(indol-3-yl)glycerol 3-phosphate + L-serine = D-glyceraldehyde 3-phosphate + L-tryptophan + H2O. The protein operates within amino-acid biosynthesis; L-tryptophan biosynthesis; L-tryptophan from chorismate: step 5/5. Functionally, the alpha subunit is responsible for the aldol cleavage of indoleglycerol phosphate to indole and glyceraldehyde 3-phosphate. The chain is Tryptophan synthase alpha chain from Novosphingobium aromaticivorans (strain ATCC 700278 / DSM 12444 / CCUG 56034 / CIP 105152 / NBRC 16084 / F199).